The primary structure comprises 130 residues: DNA-directed RNA polymerase subunit omega (130 aa).

2 disordered regions span residues 80–99 (PEPD…DADD) and 110–130 (EELL…EEDE). Residues 110–124 (EELLKGLEGLAPREE) show a composition bias toward basic and acidic residues.

It belongs to the RNA polymerase subunit omega family. As to quaternary structure, the RNAP catalytic core consists of 2 alpha, 1 beta, 1 beta' and 1 omega subunit. When a sigma factor is associated with the core the holoenzyme is formed, which can initiate transcription.

It carries out the reaction RNA(n) + a ribonucleoside 5'-triphosphate = RNA(n+1) + diphosphate. Functionally, promotes RNA polymerase assembly. Latches the N- and C-terminal regions of the beta' subunit thereby facilitating its interaction with the beta and alpha subunits. The protein is DNA-directed RNA polymerase subunit omega of Nitrobacter hamburgensis (strain DSM 10229 / NCIMB 13809 / X14).